A 257-amino-acid polypeptide reads, in one-letter code: Ditrans,polycis-undecaprenyl-diphosphate synthase ((2E,6E)-farnesyl-diphosphate specific) (257 aa).

Residue Asp-24 is part of the active site. Residue Asp-24 participates in Mg(2+) binding. Substrate-binding positions include 25-28 (GNGR), Trp-29, Arg-37, His-41, and 69-71 (SSE). The active-site Proton acceptor is Asn-72. Substrate is bound by residues Trp-73, Arg-75, Arg-192, and 198–200 (RIS). A Mg(2+)-binding site is contributed by Glu-211.

Belongs to the UPP synthase family. In terms of assembly, homodimer. Requires Mg(2+) as cofactor.

It catalyses the reaction 8 isopentenyl diphosphate + (2E,6E)-farnesyl diphosphate = di-trans,octa-cis-undecaprenyl diphosphate + 8 diphosphate. In terms of biological role, catalyzes the sequential condensation of isopentenyl diphosphate (IPP) with (2E,6E)-farnesyl diphosphate (E,E-FPP) to yield (2Z,6Z,10Z,14Z,18Z,22Z,26Z,30Z,34E,38E)-undecaprenyl diphosphate (di-trans,octa-cis-UPP). UPP is the precursor of glycosyl carrier lipid in the biosynthesis of bacterial cell wall polysaccharide components such as peptidoglycan and lipopolysaccharide. This Aliivibrio fischeri (strain ATCC 700601 / ES114) (Vibrio fischeri) protein is Ditrans,polycis-undecaprenyl-diphosphate synthase ((2E,6E)-farnesyl-diphosphate specific).